The sequence spans 308 residues: UDP-N-acetylenolpyruvoylglucosamine reductase (308 aa).

In terms of domain architecture, FAD-binding PCMH-type spans 22–185 (RVGGPADWLF…TEATFRAEAG (164 aa)). R165 is an active-site residue. Basic and acidic residues predominate over residues 197–211 (QIARRDSSQPTKERS). The interval 197–228 (QIARRDSSQPTKERSAGSTFRNPAGFSSTGRA) is disordered. A compositionally biased stretch (polar residues) spans 212-226 (AGSTFRNPAGFSSTG). S214 functions as the Proton donor in the catalytic mechanism. The active site involves E296.

This sequence belongs to the MurB family. The cofactor is FAD.

The protein resides in the cytoplasm. It carries out the reaction UDP-N-acetyl-alpha-D-muramate + NADP(+) = UDP-N-acetyl-3-O-(1-carboxyvinyl)-alpha-D-glucosamine + NADPH + H(+). It functions in the pathway cell wall biogenesis; peptidoglycan biosynthesis. Functionally, cell wall formation. The sequence is that of UDP-N-acetylenolpyruvoylglucosamine reductase from Cereibacter sphaeroides (strain ATCC 17023 / DSM 158 / JCM 6121 / CCUG 31486 / LMG 2827 / NBRC 12203 / NCIMB 8253 / ATH 2.4.1.) (Rhodobacter sphaeroides).